The primary structure comprises 373 residues: tRNA (guanine(26)-N(2))-dimethyltransferase (373 aa).

A Trm1 methyltransferase domain is found at 2–365 (KIISEGETKL…AELSDLVVLI (364 aa)). Arg35, Arg66, Asp86, Asp113, and Ala114 together coordinate S-adenosyl-L-methionine.

Belongs to the class I-like SAM-binding methyltransferase superfamily. Trm1 family.

The enzyme catalyses guanosine(26) in tRNA + 2 S-adenosyl-L-methionine = N(2)-dimethylguanosine(26) in tRNA + 2 S-adenosyl-L-homocysteine + 2 H(+). In terms of biological role, dimethylates a single guanine residue at position 26 of a number of tRNAs using S-adenosyl-L-methionine as donor of the methyl groups. This is tRNA (guanine(26)-N(2))-dimethyltransferase from Methanococcus maripaludis (strain C6 / ATCC BAA-1332).